Here is a 93-residue protein sequence, read N- to C-terminus: Acylphosphatase (93 aa).

The 87-residue stretch at 7–93 folds into the Acylphosphatase-like domain; it reads RAHVFVSGTV…EGIDGFHIRR (87 aa). Residues R22 and N40 contribute to the active site.

Belongs to the acylphosphatase family.

It catalyses the reaction an acyl phosphate + H2O = a carboxylate + phosphate + H(+). The chain is Acylphosphatase (acyP) from Haloquadratum walsbyi (strain DSM 16790 / HBSQ001).